The primary structure comprises 422 residues: Bifunctional enzyme IspD/IspF (422 aa).

Residues 1 to 267 are 2-C-methyl-D-erythritol 4-phosphate cytidylyltransferase; the sequence is MAVGLLLLAA…PISALSMPLP (267 aa). Residues 268–422 are 2-C-methyl-D-erythritol 2,4-cyclodiphosphate synthase; the sequence is LIGVGIDFHK…AIAVAQIYHR (155 aa). Residues Asp-274 and His-276 each coordinate a divalent metal cation. 4-CDP-2-C-methyl-D-erythritol 2-phosphate-binding positions include 274–276 and 301–302; these read DFH and HS. His-309 serves as a coordination point for a divalent metal cation. 4-CDP-2-C-methyl-D-erythritol 2-phosphate contacts are provided by residues 323 to 325, Phe-404, and Arg-407; that span reads DIG.

The protein in the N-terminal section; belongs to the IspD/TarI cytidylyltransferase family. IspD subfamily. This sequence in the C-terminal section; belongs to the IspF family. It depends on a divalent metal cation as a cofactor.

It carries out the reaction 2-C-methyl-D-erythritol 4-phosphate + CTP + H(+) = 4-CDP-2-C-methyl-D-erythritol + diphosphate. The catalysed reaction is 4-CDP-2-C-methyl-D-erythritol 2-phosphate = 2-C-methyl-D-erythritol 2,4-cyclic diphosphate + CMP. It functions in the pathway isoprenoid biosynthesis; isopentenyl diphosphate biosynthesis via DXP pathway; isopentenyl diphosphate from 1-deoxy-D-xylulose 5-phosphate: step 2/6. It participates in isoprenoid biosynthesis; isopentenyl diphosphate biosynthesis via DXP pathway; isopentenyl diphosphate from 1-deoxy-D-xylulose 5-phosphate: step 4/6. Bifunctional enzyme that catalyzes the formation of 4-diphosphocytidyl-2-C-methyl-D-erythritol from CTP and 2-C-methyl-D-erythritol 4-phosphate (MEP) (IspD), and catalyzes the conversion of 4-diphosphocytidyl-2-C-methyl-D-erythritol 2-phosphate (CDP-ME2P) to 2-C-methyl-D-erythritol 2,4-cyclodiphosphate (ME-CPP) with a corresponding release of cytidine 5-monophosphate (CMP) (IspF). This Tropheryma whipplei (strain TW08/27) (Whipple's bacillus) protein is Bifunctional enzyme IspD/IspF.